Here is a 296-residue protein sequence, read N- to C-terminus: Cutinase est1 (296 aa).

An N-terminal signal peptide occupies residues 1-35 (MSVTTPRREASLLSRAVAVAAAAAATVALAAPAQA). The tract at residues 36 to 57 (ANPYERGPNPTESMLEARSGPF) is disordered. Poly(ethylene terephthalate) is bound at residue tyrosine 95. The active-site Nucleophile is serine 165. Positions 166 and 190 each coordinate poly(ethylene terephthalate). Residues aspartate 211 and histidine 243 each act as charge relay system in the active site. Cysteines 276 and 294 form a disulfide.

The protein belongs to the AB hydrolase superfamily. As to quaternary structure, monomer.

The protein resides in the secreted. Its subcellular location is the periplasm. The catalysed reaction is (ethylene terephthalate)(n) + H2O = (ethylene terephthalate)(n-1) + 4-[(2-hydroxyethoxy)carbonyl]benzoate + H(+). It catalyses the reaction a butanoate ester + H2O = an aliphatic alcohol + butanoate + H(+). The enzyme catalyses cutin + H2O = cutin monomers.. Its function is as follows. Catalyzes the hydrolysis of cutin, a polyester that forms the structure of plant cuticle. Shows esterase activity towards p-nitrophenol-linked aliphatic esters (pNP-aliphatic esters). Capable of degrading the plastic poly(ethylene terephthalate) (PET), the most abundant polyester plastic in the world. Can also depolymerize the synthetic polyester poly(epsilon-caprolactone) (PCL). This is Cutinase est1 from Thermobifida alba (Thermomonospora alba).